A 430-amino-acid chain; its full sequence is Enolase (430 aa).

Gln163 lines the (2R)-2-phosphoglycerate pocket. Glu205 acts as the Proton donor in catalysis. Asp242, Glu287, and Asp314 together coordinate Mg(2+). Residues Lys339, Arg368, Ser369, and Lys390 each contribute to the (2R)-2-phosphoglycerate site. Lys339 functions as the Proton acceptor in the catalytic mechanism.

It belongs to the enolase family. Requires Mg(2+) as cofactor.

The protein localises to the cytoplasm. Its subcellular location is the secreted. It localises to the cell surface. It catalyses the reaction (2R)-2-phosphoglycerate = phosphoenolpyruvate + H2O. It participates in carbohydrate degradation; glycolysis; pyruvate from D-glyceraldehyde 3-phosphate: step 4/5. Its function is as follows. Catalyzes the reversible conversion of 2-phosphoglycerate (2-PG) into phosphoenolpyruvate (PEP). It is essential for the degradation of carbohydrates via glycolysis. This is Enolase from Geobacillus kaustophilus (strain HTA426).